The sequence spans 176 residues: NAD(P)H-quinone oxidoreductase subunit 6, chloroplastic (176 aa).

5 consecutive transmembrane segments (helical) span residues 10–30, 33–53, 61–81, 92–112, and 152–172; these read FLLV…VLLT, IYSA…HIPA, AQLL…VMFM, LWTV…VSLI, and FFLP…GAIA.

This sequence belongs to the complex I subunit 6 family. In terms of assembly, NDH is composed of at least 16 different subunits, 5 of which are encoded in the nucleus.

It localises to the plastid. The protein resides in the chloroplast thylakoid membrane. The enzyme catalyses a plastoquinone + NADH + (n+1) H(+)(in) = a plastoquinol + NAD(+) + n H(+)(out). It catalyses the reaction a plastoquinone + NADPH + (n+1) H(+)(in) = a plastoquinol + NADP(+) + n H(+)(out). Functionally, NDH shuttles electrons from NAD(P)H:plastoquinone, via FMN and iron-sulfur (Fe-S) centers, to quinones in the photosynthetic chain and possibly in a chloroplast respiratory chain. The immediate electron acceptor for the enzyme in this species is believed to be plastoquinone. Couples the redox reaction to proton translocation, and thus conserves the redox energy in a proton gradient. This is NAD(P)H-quinone oxidoreductase subunit 6, chloroplastic (ndhG) from Nandina domestica (Heavenly bamboo).